The following is a 414-amino-acid chain: Dual-specificity RNA methyltransferase RlmN (414 aa).

Over residues 1 to 13 (MTSAVGISVPNTD) the composition is skewed to polar residues. The disordered stretch occupies residues 1-22 (MTSAVGISVPNTDAQSSQSASQ). E124 acts as the Proton acceptor in catalysis. Residues 134–377 (TGSRKTLCIS…CTIRQTRGDD (244 aa)) form the Radical SAM core domain. Cysteines 141 and 382 form a disulfide. Positions 148, 152, and 155 each coordinate [4Fe-4S] cluster. S-adenosyl-L-methionine is bound by residues 204–205 (GE), S236, 258–260 (SLH), and N339. The S-methylcysteine intermediate role is filled by C382.

This sequence belongs to the radical SAM superfamily. RlmN family. It depends on [4Fe-4S] cluster as a cofactor.

It localises to the cytoplasm. The catalysed reaction is adenosine(2503) in 23S rRNA + 2 reduced [2Fe-2S]-[ferredoxin] + 2 S-adenosyl-L-methionine = 2-methyladenosine(2503) in 23S rRNA + 5'-deoxyadenosine + L-methionine + 2 oxidized [2Fe-2S]-[ferredoxin] + S-adenosyl-L-homocysteine. It catalyses the reaction adenosine(37) in tRNA + 2 reduced [2Fe-2S]-[ferredoxin] + 2 S-adenosyl-L-methionine = 2-methyladenosine(37) in tRNA + 5'-deoxyadenosine + L-methionine + 2 oxidized [2Fe-2S]-[ferredoxin] + S-adenosyl-L-homocysteine. In terms of biological role, specifically methylates position 2 of adenine 2503 in 23S rRNA and position 2 of adenine 37 in tRNAs. m2A2503 modification seems to play a crucial role in the proofreading step occurring at the peptidyl transferase center and thus would serve to optimize ribosomal fidelity. The protein is Dual-specificity RNA methyltransferase RlmN of Acinetobacter baylyi (strain ATCC 33305 / BD413 / ADP1).